The primary structure comprises 213 residues: 3-isopropylmalate dehydratase small subunit (213 aa).

The protein belongs to the LeuD family. LeuD type 1 subfamily. Heterodimer of LeuC and LeuD.

It carries out the reaction (2R,3S)-3-isopropylmalate = (2S)-2-isopropylmalate. Its pathway is amino-acid biosynthesis; L-leucine biosynthesis; L-leucine from 3-methyl-2-oxobutanoate: step 2/4. Catalyzes the isomerization between 2-isopropylmalate and 3-isopropylmalate, via the formation of 2-isopropylmaleate. In Neisseria gonorrhoeae (strain ATCC 700825 / FA 1090), this protein is 3-isopropylmalate dehydratase small subunit.